Here is a 338-residue protein sequence, read N- to C-terminus: Large ribosomal subunit protein uL3 (338 aa).

Positions 230 to 253 (HRKGHRRTGTIGPQAPALMFTQPR) are disordered.

The protein belongs to the universal ribosomal protein uL3 family. In terms of assembly, part of the 50S ribosomal subunit. Forms a cluster with proteins L14 and L24e.

One of the primary rRNA binding proteins, it binds directly near the 3'-end of the 23S rRNA, where it nucleates assembly of the 50S subunit. The polypeptide is Large ribosomal subunit protein uL3 (Pyrobaculum neutrophilum (strain DSM 2338 / JCM 9278 / NBRC 100436 / V24Sta) (Thermoproteus neutrophilus)).